The sequence spans 658 residues: MTQLAIGEATPHGATYDGHGVNFTLFSAHAERVELCVFDSRGNERRYDLPGRRGDVWHGYLAGARPGLRYGYRVHGPWQPAQGHRFNPAKLLLDPYARRVEGELKDHPLLHGGHDEPDYRDNAAVAPKSVVISDHYDWEDDAAPRTPWGKTVIYEAHVKGLTYLHPELPQEIRGTYKALGHPVMVAYFKQLGITALELLPVAQFASEPRLQRMGLTNYWGYNPMAMFALHPAWASSPEMALDEFRDAVKALHRAGIEVILDIVLNHSAELDLDGPTFSLRGIDNRSYYWIRDDGDYHNWTGCGNTLNLSHPGVVEYACECLRYWVETCHVDGFRFDLASVMGRTPTFRQDAPLFAAIKACPVLSTVKLIAEPWDIGEGGYQVGNFPPPFAEWNDHFRDAARRFWLPRNLTTGEFACRFAASSDVFKRNGRAPGASVNLLTAHDGFTLRDCVCFNQKHNEANGEENRDGTNSNYSDNHGKEGLGGPLDLMERRRDSIHALLATLLLSQGTPMLLAGDEHGHSQHGNNNAYCQDNALTWLDWQQANRGLTTFTAALIRLRQQIPALTGNSWWEEGDGNVRWLNKNAQPLSADEWQNGPKLMQILLSDRFLIAINATLEVTDIVLPEGEWRAVPPFAGEDNPVITAVWQGPAHGLCVFQRG.

The Nucleophile role is filled by Asp336. The active-site Proton donor is the Glu371. The tract at residues 459 to 484 is disordered; sequence EANGEENRDGTNSNYSDNHGKEGLGG.

Belongs to the glycosyl hydrolase 13 family.

It catalyses the reaction Hydrolysis of (1-&gt;6)-alpha-D-glucosidic linkages to branches with degrees of polymerization of three or four glucose residues in limit dextrin.. The protein operates within glycan degradation; glycogen degradation. Removes maltotriose and maltotetraose chains that are attached by 1,6-alpha-linkage to the limit dextrin main chain, generating a debranched limit dextrin. The protein is Glycogen debranching enzyme of Salmonella dublin (strain CT_02021853).